The following is a 221-amino-acid chain: Urease accessory protein UreF (221 aa).

It belongs to the UreF family. In terms of assembly, ureD, UreF and UreG form a complex that acts as a GTP-hydrolysis-dependent molecular chaperone, activating the urease apoprotein by helping to assemble the nickel containing metallocenter of UreC. The UreE protein probably delivers the nickel.

It is found in the cytoplasm. Functionally, required for maturation of urease via the functional incorporation of the urease nickel metallocenter. This is Urease accessory protein UreF from Vibrio parahaemolyticus.